The sequence spans 435 residues: FAD-dependent monooxygenase ATEG_07662 (435 aa).

A helical membrane pass occupies residues Pro-8–Leu-28. The FAD site is built by Glu-38, Ala-51, and Arg-119. The N-linked (GlcNAc...) asparagine glycan is linked to Asn-191. The active site involves Arg-201. Residues Asp-317 and Ala-330 each contribute to the FAD site.

Belongs to the paxM FAD-dependent monooxygenase family. Requires FAD as cofactor.

It is found in the membrane. It functions in the pathway secondary metabolite biosynthesis. Functionally, FAD-dependent monooxygenase; part of the cluster B that mediates the biosynthesis of azasperpyranones, members of the azaphilone family that exhibit anti-cancer activities. Azasperpyranones are synthesized by 2 clusters, A and B. Cluster A is responsible for the production of the polyhydric phenol moiety while the azaphilonoid scaffold is produced by the cluster B. The non-reducing polyketide synthase ATEG_03629 produces 5-methyl orsellinic acid, which is then reduced to 5-methyl orsellinic aldehyde by the NRPS-like protein ATEG_03630. 5-methyl orsellinic aldehyde is then first hydroxylated by the FAD-dependent monooxygenase ATEG_03635 and subsequently hydroxylated by the cytochrome P450 monooxygenase ATEG_03631 to produce the unstable polyhydric phenol precursor of azasperpyranones. On the other hand, the polyketide synthase ATEG_07659 is responsible for producing the 3,5-dimethyloctadienone moiety from acetyl-CoA, three malonyl-CoA, and two S-adenosyl methionines (SAM). The 3,5-dimethyloctadienone moiety is then loaded onto the SAT domain of ATEG_07661 and extended with four malonyl-CoA and one SAM, which leads to the formation of 2,4-dihydroxy-6-(5,7-dimethyl-2-oxo-trans-3-trans-5-nonadienyl)-3-methylbenzaldehyde (compound 8) after reductive release and aldol condensation. The FAD-dependent monooxygenase ATEG_07662 is the next enzyme in the biosynthesis sequence and hydroxylates the side chain at the benzylic position of compound 8. In Aspergillus nidulans, afoF, the ortholog of the FAD-dependent oxygenase ATEG_07660, is the key enzyme for the biosynthesis of asperfuranone by catalyzing the hydroxylation at C-8 of to prevent the formation of a six-membered ring hemiacetal intermediate and thus facilitating the formation of a five-membered ring to produce asperfuranone. In Aspergillus terreus, ATEG_07660 is probably not functional, which leads to the formation of the six-membered ring hemiacetal intermediate presperpyranone instead of asperfuranone. Finally, ATEG_03636 is involved in the condensation of the polyhydric phenol moiety produced by cluster A and the perasperpyranone precursor produced by cluster B, to yield azasperpyranone A. Further modifications of azasperpyranone A result in the production of derivatives, including azasperpyranone B to F. The chain is FAD-dependent monooxygenase ATEG_07662 from Aspergillus terreus (strain NIH 2624 / FGSC A1156).